Consider the following 380-residue polypeptide: Pectin lyase (380 aa).

The N-terminal stretch at Met-1 to Ala-20 is a signal peptide. Asn-130 carries an N-linked (GlcNAc...) asparagine glycan.

It belongs to the polysaccharide lyase 1 family.

The protein resides in the secreted. The catalysed reaction is Eliminative cleavage of (1-&gt;4)-alpha-D-galacturonan methyl ester to give oligosaccharides with 4-deoxy-6-O-methyl-alpha-D-galact-4-enuronosyl groups at their non-reducing ends.. The polypeptide is Pectin lyase (PNLA) (Colletotrichum gloeosporioides (Anthracnose fungus)).